Consider the following 211-residue polypeptide: LexA repressor (211 aa).

Positions Arg-30–Lys-50 form a DNA-binding region, H-T-H motif. Active-site for autocatalytic cleavage activity residues include Ser-128 and Lys-165.

The protein belongs to the peptidase S24 family. As to quaternary structure, homodimer.

The catalysed reaction is Hydrolysis of Ala-|-Gly bond in repressor LexA.. In terms of biological role, represses a number of genes involved in the response to DNA damage (SOS response), including recA and lexA. In the presence of single-stranded DNA, RecA interacts with LexA causing an autocatalytic cleavage which disrupts the DNA-binding part of LexA, leading to derepression of the SOS regulon and eventually DNA repair. The sequence is that of LexA repressor from Haemophilus ducreyi (strain 35000HP / ATCC 700724).